We begin with the raw amino-acid sequence, 330 residues long: Protein TIFY 11f (330 aa).

The Tify 1 domain maps to 61-97 (EAAAAAQLKIMYGGRMLVFDDFFPAGGAVVELVRAAA). Positions 124–142 (PVVRKVSLQRFVEKRRRMR) match the Jas motif. The Nuclear localization signal motif lies at 126-133 (VRKVSLQR). In terms of domain architecture, Tify 2 spans 228–264 (EAAAAAQLKIMYGGRMLVFDDFFPAGGAVVELVRAAA). Positions 267 to 330 (GRDDDGARAR…SGRTDDAAFY (64 aa)) are disordered.

The protein belongs to the TIFY/JAZ family. Post-translationally, ubiquitinated. Targeted for degradation by the SCF(COI1) E3 ubiquitin ligase-proteasome pathway during jasmonate signaling.

The protein localises to the nucleus. In terms of biological role, repressor of jasmonate responses. This is Protein TIFY 11f from Oryza sativa subsp. japonica (Rice).